A 129-amino-acid polypeptide reads, in one-letter code: UPF0212 protein MM_2357 (129 aa).

The protein belongs to the UPF0212 family.

This Methanosarcina mazei (strain ATCC BAA-159 / DSM 3647 / Goe1 / Go1 / JCM 11833 / OCM 88) (Methanosarcina frisia) protein is UPF0212 protein MM_2357.